The sequence spans 166 residues: MFPMVTEFMNYGQQTVRAARYIGQGFMITLSHANRLPVTIQYPYEKLITSERFRGRIHFEFDKCIACEVCVRVCPIDLPVVDWKLETDIRKKRLLNYSIDFGICIFCGNCVEYCPTNCLSMTEEYELSTYDRHELNYNQIALGRLPMSILDDYTIRTILNLPERKT.

2 consecutive 4Fe-4S ferredoxin-type domains span residues 55-84 and 95-124; these read GRIH…VDWK and LNYS…MTEE. Residues C64, C67, C70, C74, C104, C107, C110, and C114 each coordinate [4Fe-4S] cluster.

The protein belongs to the complex I 23 kDa subunit family. In terms of assembly, NDH is composed of at least 16 different subunits, 5 of which are encoded in the nucleus. [4Fe-4S] cluster serves as cofactor.

It is found in the plastid. Its subcellular location is the chloroplast thylakoid membrane. It catalyses the reaction a plastoquinone + NADH + (n+1) H(+)(in) = a plastoquinol + NAD(+) + n H(+)(out). The catalysed reaction is a plastoquinone + NADPH + (n+1) H(+)(in) = a plastoquinol + NADP(+) + n H(+)(out). Functionally, NDH shuttles electrons from NAD(P)H:plastoquinone, via FMN and iron-sulfur (Fe-S) centers, to quinones in the photosynthetic chain and possibly in a chloroplast respiratory chain. The immediate electron acceptor for the enzyme in this species is believed to be plastoquinone. Couples the redox reaction to proton translocation, and thus conserves the redox energy in a proton gradient. This Chaetymenia peduncularis (Daisy) protein is NAD(P)H-quinone oxidoreductase subunit I, chloroplastic.